Reading from the N-terminus, the 171-residue chain is LIM domain transcription factor LMO4-B (171 aa).

Positions 1-19 (MVNNRISESTTTAVSNNGS) are enriched in polar residues. Residues 1-20 (MVNNRISESTTTAVSNNGSP) are disordered. LIM zinc-binding domains follow at residues 22-84 (KACA…LFGN) and 86-148 (GACN…GLLN).

Functionally, acts as a positive cofactor of GATA transcription factors to establish the identity of the ventral mesoderm during gastrulation. Down-regulation in the dorsal mesoderm is necessary for the proper formation of this territory since, when present, lmo4 may bind ldb1 and restrict the availability of this cofactor for Spemman organizer transcription factors. At neurula stages, suppresses primary neuron differentiation and modulates gene expression at the Isthmic Organizer of the midbrain-hindbrain boundary. The chain is LIM domain transcription factor LMO4-B (lmo4-b) from Xenopus laevis (African clawed frog).